The primary structure comprises 899 residues: Periodic tryptophan protein 2 homolog (899 aa).

WD repeat units lie at residues 9-52, 53-92, 94-132, 149-188, 193-232, 252-291, 294-334, 337-376, 379-418, 422-464, 465-504, 507-546, and 569-608; these read NLLG…TLPF, SHRK…VLYH, SFKA…DANA, QHFD…GFTP, GHRQ…GQDE, QNSA…MIHT, ISQN…YILK, GHFD…CIVT, EHTS…NFRT, PERL…DRLS, GHEG…QTSE, QLNS…QQAG, and AGTK…LLKK. Positions 639–668 are disordered; sequence DEQGEASDFEDRIDRSLPGSKRGDPSARRK. The segment covering 647-668 has biased composition (basic and acidic residues); sequence FEDRIDRSLPGSKRGDPSARRK. A WD 14 repeat occupies 669 to 709; sequence NPEVRVNGVAFSPNGSAFCAASTEGLLIYSLDTTIQFDPFD. Positions 866-899 are disordered; it reads TGSDEQPGAGGMSLNDVMQQDEGNASEDEWIGLV. Positions 889–899 are enriched in acidic residues; sequence NASEDEWIGLV.

Belongs to the WD repeat PWP2 family.

This chain is Periodic tryptophan protein 2 homolog, found in Neurospora crassa (strain ATCC 24698 / 74-OR23-1A / CBS 708.71 / DSM 1257 / FGSC 987).